Here is a 213-residue protein sequence, read N- to C-terminus: MDEKGILVAISGGSCSGKTTVAEMIYQLLSKKLKVAIICQDNYYKSYKNKPLLKRKTINFDHPDAFDWKLLRSHIEDLLNGSIVNVPLYDYINYTRAKKTAKIGPIDVVILEGLMPWFDEKLSRLSKLKIFIETNGEERLIRRIERDWQRGRNIDSIIKQWREIVAPMYEIFVEKMKRNADLILPWSQRREVSTSVLDVAIEHLFHKTVEKNN.

Residue 12–19 (GGSCSGKT) coordinates ATP.

It belongs to the uridine kinase family.

The protein localises to the cytoplasm. The catalysed reaction is uridine + ATP = UMP + ADP + H(+). It catalyses the reaction cytidine + ATP = CMP + ADP + H(+). It participates in pyrimidine metabolism; CTP biosynthesis via salvage pathway; CTP from cytidine: step 1/3. Its pathway is pyrimidine metabolism; UMP biosynthesis via salvage pathway; UMP from uridine: step 1/1. The polypeptide is Uridine kinase (udk) (Mycoplasma genitalium (strain ATCC 33530 / DSM 19775 / NCTC 10195 / G37) (Mycoplasmoides genitalium)).